The chain runs to 453 residues: GTPase Der (453 aa).

2 consecutive EngA-type G domains span residues 4-169 and 178-353; these read PIVA…PPAD and IGVA…EQHR. GTP contacts are provided by residues 10–17, 57–61, 120–123, 184–191, 231–235, and 296–299; these read GRPNVGKS, DTGGL, NKCE, DTAGI, and NKWD. The KH-like domain maps to 354–439; the sequence is RRVGTSVINE…PIRLFWRGKK (86 aa).

Belongs to the TRAFAC class TrmE-Era-EngA-EngB-Septin-like GTPase superfamily. EngA (Der) GTPase family. In terms of assembly, associates with the 50S ribosomal subunit.

Functionally, GTPase that plays an essential role in the late steps of ribosome biogenesis. This is GTPase Der from Synechococcus sp. (strain ATCC 27144 / PCC 6301 / SAUG 1402/1) (Anacystis nidulans).